The sequence spans 342 residues: Anthranilate phosphoribosyltransferase (342 aa).

Residues G79, 82–83, T87, 89–92, 107–115, and S119 contribute to the 5-phospho-alpha-D-ribose 1-diphosphate site; these read GD, NIST, and KHCNQRISS. G79 lines the anthranilate pocket. S91 serves as a coordination point for Mg(2+). N110 provides a ligand contact to anthranilate. R165 is a binding site for anthranilate. Mg(2+) is bound by residues D223 and E224.

Belongs to the anthranilate phosphoribosyltransferase family. Homodimer. It depends on Mg(2+) as a cofactor.

It carries out the reaction N-(5-phospho-beta-D-ribosyl)anthranilate + diphosphate = 5-phospho-alpha-D-ribose 1-diphosphate + anthranilate. The protein operates within amino-acid biosynthesis; L-tryptophan biosynthesis; L-tryptophan from chorismate: step 2/5. Its function is as follows. Catalyzes the transfer of the phosphoribosyl group of 5-phosphorylribose-1-pyrophosphate (PRPP) to anthranilate to yield N-(5'-phosphoribosyl)-anthranilate (PRA). The protein is Anthranilate phosphoribosyltransferase of Buchnera aphidicola subsp. Acyrthosiphon pisum (strain Tuc7).